The primary structure comprises 291 residues: Acetyl-coenzyme A carboxylase carboxyl transferase subunit beta (291 aa).

In terms of domain architecture, CoA carboxyltransferase N-terminal spans 23-291 (VWHKCPSCTA…PPDLPVEESV (269 aa)). Zn(2+) is bound by residues Cys-27, Cys-30, Cys-46, and Cys-49. The segment at 27 to 49 (CPSCTAVLYRVELERNLEVCPKC) adopts a C4-type zinc-finger fold.

The protein belongs to the AccD/PCCB family. In terms of assembly, acetyl-CoA carboxylase is a heterohexamer composed of biotin carboxyl carrier protein (AccB), biotin carboxylase (AccC) and two subunits each of ACCase subunit alpha (AccA) and ACCase subunit beta (AccD). Requires Zn(2+) as cofactor.

The protein localises to the cytoplasm. It catalyses the reaction N(6)-carboxybiotinyl-L-lysyl-[protein] + acetyl-CoA = N(6)-biotinyl-L-lysyl-[protein] + malonyl-CoA. The protein operates within lipid metabolism; malonyl-CoA biosynthesis; malonyl-CoA from acetyl-CoA: step 1/1. Component of the acetyl coenzyme A carboxylase (ACC) complex. Biotin carboxylase (BC) catalyzes the carboxylation of biotin on its carrier protein (BCCP) and then the CO(2) group is transferred by the transcarboxylase to acetyl-CoA to form malonyl-CoA. The sequence is that of Acetyl-coenzyme A carboxylase carboxyl transferase subunit beta from Coxiella burnetii (strain Dugway 5J108-111).